A 241-amino-acid polypeptide reads, in one-letter code: Small ribosomal subunit protein uS2 (241 aa).

This sequence belongs to the universal ribosomal protein uS2 family.

In Enterobacter sp. (strain 638), this protein is Small ribosomal subunit protein uS2.